Here is a 155-residue protein sequence, read N- to C-terminus: SsrA-binding protein (155 aa).

This sequence belongs to the SmpB family.

The protein resides in the cytoplasm. Its function is as follows. Required for rescue of stalled ribosomes mediated by trans-translation. Binds to transfer-messenger RNA (tmRNA), required for stable association of tmRNA with ribosomes. tmRNA and SmpB together mimic tRNA shape, replacing the anticodon stem-loop with SmpB. tmRNA is encoded by the ssrA gene; the 2 termini fold to resemble tRNA(Ala) and it encodes a 'tag peptide', a short internal open reading frame. During trans-translation Ala-aminoacylated tmRNA acts like a tRNA, entering the A-site of stalled ribosomes, displacing the stalled mRNA. The ribosome then switches to translate the ORF on the tmRNA; the nascent peptide is terminated with the 'tag peptide' encoded by the tmRNA and targeted for degradation. The ribosome is freed to recommence translation, which seems to be the essential function of trans-translation. This Bacillus cereus (strain G9842) protein is SsrA-binding protein.